The primary structure comprises 256 residues: D-aminoacyl-tRNA deacylase (256 aa).

This sequence belongs to the DtdA deacylase family. In terms of assembly, monomer. It depends on Zn(2+) as a cofactor.

The catalysed reaction is a D-aminoacyl-tRNA + H2O = a tRNA + a D-alpha-amino acid + H(+). It catalyses the reaction glycyl-tRNA(Ala) + H2O = tRNA(Ala) + glycine + H(+). Its function is as follows. D-aminoacyl-tRNA deacylase with broad substrate specificity. By recycling D-aminoacyl-tRNA to D-amino acids and free tRNA molecules, this enzyme counteracts the toxicity associated with the formation of D-aminoacyl-tRNA entities in vivo. This chain is D-aminoacyl-tRNA deacylase, found in Thermoplasma acidophilum (strain ATCC 25905 / DSM 1728 / JCM 9062 / NBRC 15155 / AMRC-C165).